Consider the following 271-residue polypeptide: NH(3)-dependent NAD(+) synthetase (271 aa).

43 to 50 contributes to the ATP binding site; it reads GISGGQDS. Residue aspartate 49 participates in Mg(2+) binding. Arginine 136 serves as a coordination point for deamido-NAD(+). An ATP-binding site is contributed by threonine 156. Glutamate 161 contributes to the Mg(2+) binding site. Positions 169 and 176 each coordinate deamido-NAD(+). Positions 185 and 207 each coordinate ATP. Deamido-NAD(+) is bound at residue 256–257; sequence HK.

Belongs to the NAD synthetase family. In terms of assembly, homodimer.

It catalyses the reaction deamido-NAD(+) + NH4(+) + ATP = AMP + diphosphate + NAD(+) + H(+). It functions in the pathway cofactor biosynthesis; NAD(+) biosynthesis; NAD(+) from deamido-NAD(+) (ammonia route): step 1/1. In terms of biological role, catalyzes the ATP-dependent amidation of deamido-NAD to form NAD. Uses ammonia as a nitrogen source. This chain is NH(3)-dependent NAD(+) synthetase, found in Tropheryma whipplei (strain TW08/27) (Whipple's bacillus).